We begin with the raw amino-acid sequence, 517 residues long: MSPLALVSVSDKTNIIPFCKDLVEKFGYNILSSGGTAEYLTEAKVPVLKVADFTESPEILDGRVKTLHPKIHGGILAKRSNEEHQREILENKLELIDLVVVNLYPFKKKVEEQCPWEEAIENIDIGGPSMIRSAAKNHADVAVLVDPNQYQNYIEEIKKGPLSKDFKTKLAFEAFQHTASYDSAISNWISKEKDLRPSNFIESYPLIKQLRYGENPHQKALWYGLNNIGWNSAEQLQGKELSYNNILDLESALLTVLEFGYETKPNIKTESIAAVILKHNNPCGASISNSASSSFKNALKCDSVSAFGGIVAFNANVDKETALILKDIFLECVVAPSFDKEALEIFKTKKNLRVLKLTKEMLPKENQTCSKSIMGGILIQDSDNQENSEDSWISVTKKNPTEQEYLDLKFAWKICKHVKSNAIVVAKDQQTLGIGAGQMNRVGASKIALEAAKEIDSGGVLASDGFFPFADTVRLADKYGISSIIQPGGSIRDEESIKMCDSRGISMIFTHKRHFLH.

An MGS-like domain is found at 1–145; that stretch reads MSPLALVSVS…KNHADVAVLV (145 aa).

This sequence belongs to the PurH family.

It catalyses the reaction (6R)-10-formyltetrahydrofolate + 5-amino-1-(5-phospho-beta-D-ribosyl)imidazole-4-carboxamide = 5-formamido-1-(5-phospho-D-ribosyl)imidazole-4-carboxamide + (6S)-5,6,7,8-tetrahydrofolate. The catalysed reaction is IMP + H2O = 5-formamido-1-(5-phospho-D-ribosyl)imidazole-4-carboxamide. Its pathway is purine metabolism; IMP biosynthesis via de novo pathway; 5-formamido-1-(5-phospho-D-ribosyl)imidazole-4-carboxamide from 5-amino-1-(5-phospho-D-ribosyl)imidazole-4-carboxamide (10-formyl THF route): step 1/1. It participates in purine metabolism; IMP biosynthesis via de novo pathway; IMP from 5-formamido-1-(5-phospho-D-ribosyl)imidazole-4-carboxamide: step 1/1. This is Bifunctional purine biosynthesis protein PurH from Prochlorococcus marinus (strain MIT 9515).